The primary structure comprises 609 residues: Chaperone protein DnaK (609 aa).

Thr-173 is modified (phosphothreonine; by autocatalysis). Residues 580–609 (QAAQGGGAEGQEPKKDNVVDADYEVVDDKK) form a disordered region. Positions 598 to 609 (VDADYEVVDDKK) are enriched in acidic residues.

Belongs to the heat shock protein 70 family.

Functionally, acts as a chaperone. This chain is Chaperone protein DnaK, found in Brevibacillus brevis (strain 47 / JCM 6285 / NBRC 100599).